Here is a 235-residue protein sequence, read N- to C-terminus: Carbohydrate deacetylase (235 aa).

Mg(2+)-binding residues include His61 and His124.

It belongs to the YdjC deacetylase family. Requires Mg(2+) as cofactor.

Probably catalyzes the deacetylation of acetylated carbohydrates an important step in the degradation of oligosaccharides. The sequence is that of Carbohydrate deacetylase from Bacillus cereus (strain 03BB102).